Here is a 283-residue protein sequence, read N- to C-terminus: Hydroxyacylglutathione hydrolase-like protein (283 aa).

Positions 54, 56, 58, 59, 110, 134, and 173 each coordinate Zn(2+).

Belongs to the metallo-beta-lactamase superfamily. Glyoxalase II family. Zn(2+) serves as cofactor.

Functionally, hydrolase acting on ester bonds. This is Hydroxyacylglutathione hydrolase-like protein (Haghl) from Mus musculus (Mouse).